The chain runs to 120 residues: MASPKETLQRRAARVRRQVKAVANGRPRLSVHRSSKNIYAQIIDDVRGVTLAAASTLDGDLKGKLKTGADSAAAAAVGKLVAERAVKAGVKDVVFDRGAFIYHGRVKALAEAAREGGLSF.

The protein belongs to the universal ribosomal protein uL18 family. Part of the 50S ribosomal subunit; part of the 5S rRNA/L5/L18/L25 subcomplex. Contacts the 5S and 23S rRNAs.

This is one of the proteins that bind and probably mediate the attachment of the 5S RNA into the large ribosomal subunit, where it forms part of the central protuberance. The chain is Large ribosomal subunit protein uL18 from Brucella abortus (strain S19).